The chain runs to 197 residues: Outer membrane protein 26 (197 aa).

The N-terminal stretch at 1–23 (MKNIAKVTALALGIALASGYASA) is a signal peptide.

It belongs to the Skp family.

It localises to the cell outer membrane. The polypeptide is Outer membrane protein 26 (omp26) (Haemophilus influenzae (strain ATCC 51907 / DSM 11121 / KW20 / Rd)).